Consider the following 465-residue polypeptide: Lipase 10 (465 aa).

An N-terminal signal peptide occupies residues 1-16 (MKTLLIFLAFLSSIFA). A disulfide bridge connects residues cysteine 112 and cysteine 285. The Charge relay system role is filled by serine 196. N-linked (GlcNAc...) asparagine glycans are attached at residues asparagine 231 and asparagine 319. Catalysis depends on charge relay system residues aspartate 348 and histidine 381. A disulfide bond links cysteine 364 and cysteine 409.

It belongs to the AB hydrolase superfamily. Lipase family. Class Lip subfamily.

The protein localises to the secreted. The enzyme catalyses a triacylglycerol + H2O = a diacylglycerol + a fatty acid + H(+). Its function is as follows. Secreted lipase that is able to hydrolyze both the neutral triacylglycerols and the monopalmitate ester Tween 40, allowing the use of hydrolyzed products as carbon sources. Has broad lipolytic activity, which may be important for colonization and subsequent infection, therefore contributing to the persistence and virulence in human tissue. The protein is Lipase 10 of Candida albicans (strain SC5314 / ATCC MYA-2876) (Yeast).